The chain runs to 692 residues: MGTVSSRRSWWPLPLLLLLLLLLGPAGARAQEDEDGDYEELVLALRSEEDGLAEAPEHGTTATFHRCAKDPWRLPGTYVVVLKEETHLSQSERTARRLQAQAAHRGYLTKILHVFHGLLPGFLVKMSGDLLELALKLPHVDYIEEDSSVFAQSIPWNLERITPPRYRADEYQPPDGGSLVEVYLLDTSIQSDHREIEGRVMVTDFENVPEEDGTRFHRQASKCDSHGTHLAGVVSGRDAGVAKGASMRSLRVLNCQGKGTVSGTLIGLEFIRKSQLVRPVGPLVVLLPLAGGYSRVLNAACQRLARAGVVLVTAAGNFRDDACLYSPASAPEVITVGATNAQDQPVTLGTLGTNFGRCVDLFAPGEDIIGASSDCSTCFVSQSGTSQAAAHVAGIAAMMLSAEPELTLAELRQRLIHFSAKDVINEAWFPEDQRVLTPNLVAALPPSTHGAGWQLFCRTVWSAHSGPTRMATAVARCAPDEELLSCSSFSRSGKRRGERMEAQGGKLVCRAHNAFGGEGVYAIARCCLLPQANCSVHTAPPAEAGMGTRVHCHQQGHVLTGCSSHWEVEDLGTHKPPVLRPRGQPNQCVGHREASIHASCCRAPGLECKVKEHGIPAPQEQVTVACEEGWTLTGCSALPGTSHVLGAYAVDNTCVVRNRDVSTAGSTSEEAVAAVAICCRSRHLAQASQELQ.

An N-terminal signal peptide occupies residues 1 to 30 (MGTVSSRRSWWPLPLLLLLLLLLGPAGARA). The propeptide occupies 31–152 (QEDEDGDYEE…IEEDSSVFAQ (122 aa)). Position 38 is a sulfotyrosine (Tyr38). A Phosphoserine modification is found at Ser47. The region spanning 77–149 (TYVVVLKEET…VDYIEEDSSV (73 aa)) is the Inhibitor I9 domain. A Peptidase S8 domain is found at 155 to 461 (PWNLERITPP…GWQLFCRTVW (307 aa)). Active-site charge relay system residues include Asp186 and His226. 2 disulfide bridges follow: Cys223–Cys255 and Cys323–Cys358. Catalysis depends on Ser386, which acts as the Charge relay system. Positions 450–692 (GAGWQLFCRT…HLAQASQELQ (243 aa)) are C-terminal domain. 3 cysteine pairs are disulfide-bonded: Cys457-Cys527, Cys477-Cys526, and Cys486-Cys509. Asn533 carries an N-linked (GlcNAc...) asparagine glycan. 6 disulfide bridges follow: Cys534-Cys601, Cys552-Cys600, Cys562-Cys588, Cys608-Cys679, Cys626-Cys678, and Cys635-Cys654. Phosphoserine is present on Ser688.

This sequence belongs to the peptidase S8 family. Monomer. Can self-associate to form dimers and higher multimers which may have increased LDLR degrading activity. The precursor protein but not the mature protein may form multimers. Interacts with APOB, VLDLR, LRP8/APOER2 and BACE1. The full-length immature form (pro-PCSK9) interacts with SCNN1A, SCNN1B and SCNN1G. The pro-PCSK9 form (via C-terminal domain) interacts with LDLR. Interacts (via the C-terminal domain) with ANXA2 (via repeat Annexin 1); the interaction inhibits the degradation of LDLR. The cofactor is Ca(2+). Cleavage by furin and PCSK5 generates a truncated inactive protein that is unable to induce LDLR degradation. Post-translationally, undergoes autocatalytic cleavage in the endoplasmic reticulum to release the propeptide from the N-terminus and the cleavage of the propeptide is strictly required for its maturation and activation. The cleaved propeptide however remains associated with the catalytic domain through non-covalent interactions, preventing potential substrates from accessing its active site. As a result, it is secreted from cells as a propeptide-containing, enzymatically inactive protein. In terms of processing, phosphorylation protects the propeptide against proteolysis.

Its subcellular location is the cytoplasm. The protein localises to the secreted. The protein resides in the endosome. It localises to the lysosome. It is found in the cell surface. Its subcellular location is the endoplasmic reticulum. The protein localises to the golgi apparatus. Its activity is regulated as follows. Its proteolytic activity is autoinhibited by the non-covalent binding of the propeptide to the catalytic domain. Inhibited by EGTA. Crucial player in the regulation of plasma cholesterol homeostasis. Binds to low-density lipid receptor family members: low density lipoprotein receptor (LDLR), very low density lipoprotein receptor (VLDLR), apolipoprotein E receptor (LRP1/APOER) and apolipoprotein receptor 2 (LRP8/APOER2), and promotes their degradation in intracellular acidic compartments. Acts via a non-proteolytic mechanism to enhance the degradation of the hepatic LDLR through a clathrin LDLRAP1/ARH-mediated pathway. May prevent the recycling of LDLR from endosomes to the cell surface or direct it to lysosomes for degradation. Can induce ubiquitination of LDLR leading to its subsequent degradation. Inhibits intracellular degradation of APOB via the autophagosome/lysosome pathway in a LDLR-independent manner. Involved in the disposal of non-acetylated intermediates of BACE1 in the early secretory pathway. Inhibits epithelial Na(+) channel (ENaC)-mediated Na(+) absorption by reducing ENaC surface expression primarily by increasing its proteasomal degradation. Regulates neuronal apoptosis via modulation of LRP8/APOER2 levels and related anti-apoptotic signaling pathways. In Pan paniscus (Pygmy chimpanzee), this protein is Proprotein convertase subtilisin/kexin type 9 (PCSK9).